We begin with the raw amino-acid sequence, 119 residues long: Flagellar transcriptional regulator FlhD (119 aa).

Belongs to the FlhD family. Homodimer; disulfide-linked. Forms a heterohexamer composed of two FlhC and four FlhD subunits. Each FlhC binds a FlhD dimer, forming a heterotrimer, and a hexamer assembles by dimerization of two heterotrimers.

It localises to the cytoplasm. Functions in complex with FlhC as a master transcriptional regulator that regulates transcription of several flagellar and non-flagellar operons by binding to their promoter region. Activates expression of class 2 flagellar genes, including fliA, which is a flagellum-specific sigma factor that turns on the class 3 genes. Also regulates genes whose products function in a variety of physiological pathways. This chain is Flagellar transcriptional regulator FlhD, found in Escherichia fergusonii (strain ATCC 35469 / DSM 13698 / CCUG 18766 / IAM 14443 / JCM 21226 / LMG 7866 / NBRC 102419 / NCTC 12128 / CDC 0568-73).